A 315-amino-acid polypeptide reads, in one-letter code: Ribose-phosphate pyrophosphokinase (315 aa).

ATP is bound by residues Asp-37–Glu-39 and Arg-96–Gln-97. Mg(2+) contacts are provided by His-131 and Asp-171. Residue Lys-195 is part of the active site. D-ribose 5-phosphate contacts are provided by residues Arg-197, Asp-221, and Asp-225–Thr-229.

This sequence belongs to the ribose-phosphate pyrophosphokinase family. Class I subfamily. Homohexamer. Requires Mg(2+) as cofactor.

It localises to the cytoplasm. It catalyses the reaction D-ribose 5-phosphate + ATP = 5-phospho-alpha-D-ribose 1-diphosphate + AMP + H(+). Its pathway is metabolic intermediate biosynthesis; 5-phospho-alpha-D-ribose 1-diphosphate biosynthesis; 5-phospho-alpha-D-ribose 1-diphosphate from D-ribose 5-phosphate (route I): step 1/1. Its function is as follows. Involved in the biosynthesis of the central metabolite phospho-alpha-D-ribosyl-1-pyrophosphate (PRPP) via the transfer of pyrophosphoryl group from ATP to 1-hydroxyl of ribose-5-phosphate (Rib-5-P). This is Ribose-phosphate pyrophosphokinase from Haemophilus influenzae (strain ATCC 51907 / DSM 11121 / KW20 / Rd).